The chain runs to 210 residues: CLAVATA3/ESR (CLE)-related protein 4A-3 (210 aa).

Positions 1–21 (MAKNAMLCLLILRVVLALAFA) are cleaved as a signal peptide. The required for secretion from the host cytoplasm to the host apoplasm stretch occupies residues 21-83 (ATNKKGDEEP…SNQLPNNNWM (63 aa)). Residue Asn-32 is glycosylated (N-linked (GlcNAc...) asparagine). A disordered region spans residues 116 to 210 (RKTGMHSQRH…APAGPDPIHH (95 aa)). 2 stretches are compositionally biased toward basic and acidic residues: residues 125 to 137 (HHEETTLEQEKRV) and 144 to 200 (PIHH…EKRG). The stretch at 127–135 (EETTLEQEK) is one A-1 repeat. The 4 X approximate repeat A stretch occupies residues 127–198 (EETTLEQEKR…HEDTTLEQEK (72 aa)). The stretch at 136-147 (RVAGAGPDPIHH) is one CLE-1 repeat. Residues 136–210 (RVAGAGPDPI…APAGPDPIHH (75 aa)) are 4 X approximate repeat CLE. Residues 148–156 (QDTTLEQEK) form an A-2 repeat. The stretch at 157 to 168 (RAVPAGPDPKHH) is one CLE-2 repeat. Residues 169–177 (EETTLEQEK) form an A-3 repeat. The CLE-3 repeat unit spans residues 178–189 (RAVPAGPDPKHH). The A-4 repeat unit spans residues 190–198 (EDTTLEQEK). The stretch at 199–210 (RGAPAGPDPIHH) is one CLE-4 repeat.

The protein belongs to the CLV3/ESR signal peptide family. In terms of tissue distribution, highly expressed exclusively within the dorsal esophageal gland cell during syncytium formation in host plants.

Its subcellular location is the secreted. It localises to the host cytoplasm. The protein localises to the host extracellular space. It is found in the extracellular space. The protein resides in the apoplast. Its function is as follows. Mimics host plant CLE extracellular signal peptides that regulate cell fate. May play a role in the differentiation or division of feeding cells (syncytia) induced in plant roots during infection. This Globodera rostochiensis (Golden nematode worm) protein is CLAVATA3/ESR (CLE)-related protein 4A-3 (CLE-4A-3).